Here is a 122-residue protein sequence, read N- to C-terminus: Large ribosomal subunit protein uL22 (122 aa).

Belongs to the universal ribosomal protein uL22 family. As to quaternary structure, part of the 50S ribosomal subunit.

This protein binds specifically to 23S rRNA; its binding is stimulated by other ribosomal proteins, e.g. L4, L17, and L20. It is important during the early stages of 50S assembly. It makes multiple contacts with different domains of the 23S rRNA in the assembled 50S subunit and ribosome. Its function is as follows. The globular domain of the protein is located near the polypeptide exit tunnel on the outside of the subunit, while an extended beta-hairpin is found that lines the wall of the exit tunnel in the center of the 70S ribosome. The chain is Large ribosomal subunit protein uL22 from Thermosynechococcus vestitus (strain NIES-2133 / IAM M-273 / BP-1).